Here is a 262-residue protein sequence, read N- to C-terminus: 26 kDa secreted antigen (262 aa).

Residues 1-21 (MSVVHKACLIALLFVSSGVAQ) form the signal peptide. ShKT domains lie at 23–57 (CMDS…CNTC) and 59–93 (CRDE…CGLC). 6 cysteine pairs are disulfide-bonded: C23/C57, C30/C50, C37/C54, C59/C93, C66/C86, and C73/C90.

The protein belongs to the phosphatidylethanolamine-binding protein family.

The protein localises to the secreted. Its function is as follows. Binds phosphatidylethanolamine. This chain is 26 kDa secreted antigen (TES-26), found in Toxocara canis (Canine roundworm).